We begin with the raw amino-acid sequence, 323 residues long: Ferrochelatase (323 aa).

H196 and E277 together coordinate Fe cation.

Belongs to the ferrochelatase family.

It localises to the cytoplasm. It catalyses the reaction heme b + 2 H(+) = protoporphyrin IX + Fe(2+). It functions in the pathway porphyrin-containing compound metabolism; protoheme biosynthesis; protoheme from protoporphyrin-IX: step 1/1. In terms of biological role, catalyzes the ferrous insertion into protoporphyrin IX. The sequence is that of Ferrochelatase from Haemophilus influenzae (strain 86-028NP).